Consider the following 95-residue polypeptide: Small ribosomal subunit protein bS6 (95 aa).

Belongs to the bacterial ribosomal protein bS6 family.

In terms of biological role, binds together with bS18 to 16S ribosomal RNA. The sequence is that of Small ribosomal subunit protein bS6 from Acholeplasma laidlawii (strain PG-8A).